We begin with the raw amino-acid sequence, 507 residues long: Myocyte-specific enhancer factor 2D (507 aa).

Positions 3–57 (RKKIQIQRITDERNRQVTFTKRKFGLMKKAYELSVLCDCEIALIIFNHSNKLFQY) constitute an MADS-box domain. Residues 58–86 (ASTDMDKVLLKYTEYNEPHESRTNADIIE) constitute a DNA-binding region (mef2-type). Ser-98, Ser-106, Ser-110, Ser-121, and Ser-180 each carry phosphoserine. The tract at residues 174–207 (TDPRLLSPQQPALQRNSVSPGLPQRPASAGAMLG) is disordered. Polar residues predominate over residues 180–192 (SPQQPALQRNSVS). Residue Ser-190 is modified to Phosphoserine; by PKA. A Phosphoserine modification is found at Ser-231. Disordered regions lie at residues 244-267 (NKVI…PSRK), 357-392 (WQQP…QQPH), and 423-507 (SIKS…WTLK). An N6-acetyllysine modification is found at Lys-245. Position 251 is a phosphoserine (Ser-251). The span at 363-389 (PQQPQPPQPPQSQPQPPQPQPQQPPQQ) shows a compositional bias: pro residues. Lys-425 bears the N6-acetyllysine; alternate mark. Residue Lys-425 forms a Glycyl lysine isopeptide (Lys-Gly) (interchain with G-Cter in SUMO); alternate linkage. Ser-430 bears the Phosphoserine mark.

In terms of assembly, forms a complex with class II HDACs in undifferentiating cells. On myogenic differentiation, HDACs are released into the cytoplasm allowing MEF2s to interact with other proteins for activation. Interacts with HDAC4 (in undifferentiating cells); the interaction translocates MEF2D to nuclear dots. Forms a heterodimer with MEF2A. Interacts with MAPK7; the interaction phosphorylates but does not activate MEF2D. Interacts with MYOG. Interacts with CCAR2 and HDAC3. In terms of processing, phosphorylated on Ser-430 by CDK5 is required for Lys-425 sumoylation and inhibits transcriptional activity. In neurons, enhanced CDK5 activity induced by neurotoxins promotes caspase 3-mediated cleavage leading to neuron apoptosis. Phosphorylation on Ser-180 can be enhanced by EGF. Phosphorylated and activated by CaMK4. Acetylated on Lys-425 by CREBBP. Acetylated by EP300. Deacetylated by SIRT1 and HDAC3. Post-translationally, sumoylated on Lys-425 with SUMO2 but not SUMO1; which inhibits transcriptional activity and myogenic activity. Desumoylated by SENP3.

The protein resides in the nucleus. Transcriptional activator which binds specifically to the MEF2 element, 5'-YTA[AT](4)TAR-3', found in numerous muscle-specific, growth factor- and stress-induced genes. Mediates cellular functions not only in skeletal and cardiac muscle development, but also in neuronal differentiation and survival. Plays diverse roles in the control of cell growth, survival and apoptosis via p38 MAPK signaling in muscle-specific and/or growth factor-related transcription. Plays a critical role in the regulation of neuronal apoptosis. The polypeptide is Myocyte-specific enhancer factor 2D (Mef2d) (Rattus norvegicus (Rat)).